Reading from the N-terminus, the 781-residue chain is LPS-assembly protein LptD (781 aa).

Positions 1 to 24 (MKKNYYTVLSLSILTALYSTSSQA) are cleaved as a signal peptide.

Belongs to the LptD family. Component of the lipopolysaccharide transport and assembly complex. Interacts with LptE and LptA.

It localises to the cell outer membrane. Functionally, together with LptE, is involved in the assembly of lipopolysaccharide (LPS) at the surface of the outer membrane. This chain is LPS-assembly protein LptD, found in Histophilus somni (strain 129Pt) (Haemophilus somnus).